We begin with the raw amino-acid sequence, 528 residues long: Adhesion G-protein coupled receptor G5 (528 aa).

Positions 1–21 (MDHCGALFLCLCLLTLQNATT) are cleaved as a signal peptide. Residues 22–245 (ETWEELLSYM…SPALVPAELL (224 aa)) are Extracellular-facing. Residues asparagine 58, asparagine 65, asparagine 146, asparagine 147, asparagine 173, and asparagine 179 are each glycosylated (N-linked (GlcNAc...) asparagine). A GAIN-B domain is found at 78–239 (FKLSCDFSGL…AVLMQLSPAL (162 aa)). 2 disulfide bridges follow: cysteine 189–cysteine 221 and cysteine 209–cysteine 223. Residues 189-239 (CVFWKEGARKQPWGGWSPEGCRTEQPSHSQVLCRCNHLTYFAVLMQLSPAL) are GPS. The stachel stretch occupies residues 228–236 (YFAVLMQLS). Residues 246–271 (APLTYISLVGCSISIVASLITVLLHF) form a helical membrane-spanning segment. Topologically, residues 272–280 (HFRKQSDSL) are cytoplasmic. Residues 281 to 304 (TRIHMNLHASVLLLNIAFLLSPAF) traverse the membrane as a helical segment. Residues 305–314 (AMSPVPGSAC) lie on the Extracellular side of the membrane. Residues cysteine 314 and cysteine 404 are joined by a disulfide bond. Residues 315–340 (TALAAALHYALLSCLTWMAIEGFNLY) traverse the membrane as a helical segment. Topologically, residues 341–353 (LLLGRVYNIYIRR) are cytoplasmic. Residues 354–377 (YVFKLGVLGWGAPALLVLLSLSVK) form a helical membrane-spanning segment. Residues 378–410 (SSVYGPCTIPVFDSWENGTGFQNMSICWVRSPV) are Extracellular-facing. N-linked (GlcNAc...) asparagine glycans are attached at residues asparagine 394 and asparagine 400. The chain crosses the membrane as a helical span at residues 411 to 435 (VHSVLVMGYGGLTSLFNLVVLAWAL). Residues 436–455 (WTLRRLRERADAPSVRACHD) are Cytoplasmic-facing. Residues 456–477 (TVTVLGLTVLLGTTWALAFFSF) traverse the membrane as a helical segment. Residues 478-481 (GVFL) are Extracellular-facing. Residues 482 to 505 (LPQLFLFTILNSLYGFFLFLWFCS) form a helical membrane-spanning segment. The Cytoplasmic segment spans residues 506–528 (QRCRSEAEAKAQIEAFSSSQTTQ).

It belongs to the G-protein coupled receptor 2 family. Adhesion G-protein coupled receptor (ADGR) subfamily. In terms of assembly, heterodimer of 2 chains generated by proteolytic processing; the large extracellular N-terminal fragment and the membrane-bound C-terminal fragment predominantly remain associated and non-covalently linked. In terms of processing, autoproteolytically processed at the GPS region of the GAIN-B domain; this cleavage modulates receptor activity. N-glycsylated. In terms of tissue distribution, expressed in immune cells. Primarily found in granulocytes. Found in eosinophils.

It localises to the cell membrane. With respect to regulation, forms a heterodimer of 2 chains generated by proteolytic processing that remain associated through non-covalent interactions mediated by the GAIN-B domain. In the inactivated receptor, the Stachel sequence (also named stalk) is embedded in the GAIN-B domain, where it adopts a beta-strand conformation. On activation, the Stachel moves into the 7 transmembrane region and adopts a twisted hook-shaped configuration that forms contacts within the receptor, leading to coupling of a G-alpha protein, which activates signaling. The cleaved GAIN-B and N-terminal domains can then dissociate from the rest of the receptor. In terms of biological role, orphan adhesion G-protein coupled receptor (aGPCR). Ligand binding causes a conformation change that triggers signaling via guanine nucleotide-binding proteins (G proteins) and modulates the activity of downstream effectors, such as adenylate cyclase. ADGRG5 is specifically coupled to G(s) G proteins and mediates activation of adenylate cyclase activity. The protein is Adhesion G-protein coupled receptor G5 of Homo sapiens (Human).